Here is a 75-residue protein sequence, read N- to C-terminus: Protein BRICK1 (75 aa).

Residue Ala-2 is modified to N-acetylalanine. A coiled-coil region spans residues Met-41–Glu-72.

This sequence belongs to the BRK1 family. In terms of assembly, homotrimer when in free form. Directly interacts with WASF2. Component of the WAVE1 complex composed of ABI2, CYFIP1 or CYFIP2, BRK1, NCKAP1 and WASF1/WAVE1. Within the complex, a heterodimer containing NCKAP1 and CYFIP1 interacts with a heterotrimer formed by WAVE1, ABI2 and BRK1.

It localises to the cytoplasm. It is found in the cytoskeleton. In terms of biological role, involved in regulation of actin and microtubule organization. Part of a WAVE complex that activates the Arp2/3 complex. As component of the WAVE1 complex, required for BDNF-NTRK2 endocytic trafficking and signaling from early endosomes. The protein is Protein BRICK1 (BRK1) of Homo sapiens (Human).